Here is a 149-residue protein sequence, read N- to C-terminus: Ribosome maturation factor RimP (149 aa).

Belongs to the RimP family.

Its subcellular location is the cytoplasm. Its function is as follows. Required for maturation of 30S ribosomal subunits. This Neisseria meningitidis serogroup A / serotype 4A (strain DSM 15465 / Z2491) protein is Ribosome maturation factor RimP.